The primary structure comprises 179 residues: Lebocin-4 (179 aa).

The signal sequence occupies residues 1–16 (MYKFLVFSSVLVLFFA). Positions 17-120 (QASCQRFIQP…RPIESHRNTR (104 aa)) are excised as a propeptide. A glycan (O-linked (GalNAc...) threonine) is linked at threonine 135. Positions 153–179 (RRHASDDQEELRHHNEHFLIPRDILQD) are excised as a propeptide.

It belongs to the lebocin family. In terms of processing, O-glycosylation is important for the antibacterial activity of lebocin. Hemolymph. Produced in fat body.

Its subcellular location is the secreted. In terms of biological role, antibacterial peptide. This chain is Lebocin-4 (LEB4), found in Bombyx mori (Silk moth).